A 715-amino-acid chain; its full sequence is Eukaryotic peptide chain release factor GTP-binding subunit (715 aa).

Positions 1 to 12 (MANASLNGDQSK) are enriched in polar residues. Disordered stretches follow at residues 1–148 (MANA…SLNK) and 168–262 (ATKK…SNSA). Residues 5–128 (SLNGDQSKQQ…PQQQQQQQSQ (124 aa)) form a several sort of repeats region. Over residues 13–25 (QQQQQQQQQQQQQ) the composition is skewed to low complexity. The span at 26-37 (NYYNPNAAQSFV) shows a compositional bias: polar residues. Composition is skewed to low complexity over residues 39–129 (QGGY…QSQG) and 176–198 (SKPQSKESSPAPAPAASASASAP). The tract at residues 129 to 285 (GMSLADFQKQ…DEIDEEVVKD (157 aa)) is charged. 2 stretches are compositionally biased toward basic and acidic residues: residues 199 to 208 (QEEKKEEKEA) and 218 to 233 (ETKKETSAPAETKKEA). The 226-residue stretch at 290-515 (KDHVSIIFMG…YLDNMDTMNR (226 aa)) folds into the tr-type G domain. The segment at 299 to 306 (GHVDAGKS) is G1. Position 299-306 (299-306 (GHVDAGKS)) interacts with GTP. The G2 stretch occupies residues 355 to 359 (GKTIE). Thr-373 carries the post-translational modification Phosphothreonine. Residues 376–379 (DAPG) form a G3 region. Residues 376–380 (DAPGH) and 438–441 (NKMD) contribute to the GTP site. A G4 region spans residues 438–441 (NKMD). A G5 region spans residues 479–481 (SGY).

Belongs to the TRAFAC class translation factor GTPase superfamily. Classic translation factor GTPase family. ERF3 subfamily.

It is found in the cytoplasm. Functionally, involved in translation termination. Stimulates the activity of ERF1. Binds guanine nucleotides. In Candida albicans (Yeast), this protein is Eukaryotic peptide chain release factor GTP-binding subunit (SUP35).